A 387-amino-acid chain; its full sequence is Early growth response protein 3 (387 aa).

Positions 241–283 (PGFGSLPQPPLTLKPIRPRKYPNRPSKTPLHERPHACPAEGCD) are disordered. Over residues 269 to 283 (PLHERPHACPAEGCD) the composition is skewed to basic and acidic residues. C2H2-type zinc fingers lie at residues 275–299 (HACP…LRIH), 305–327 (FQCR…IRTH), and 333–355 (FACE…AKIH). A disordered region spans residues 348-387 (RKRHAKIHLKQKEKKAEKGGAPSASSAPPVSLAPVVTTCA). Over residues 350-360 (RHAKIHLKQKE) the composition is skewed to basic residues. Positions 368-387 (APSASSAPPVSLAPVVTTCA) are enriched in low complexity.

It belongs to the EGR C2H2-type zinc-finger protein family.

Its subcellular location is the nucleus. Its function is as follows. Probable transcription factor involved in muscle spindle development. In Homo sapiens (Human), this protein is Early growth response protein 3 (EGR3).